Reading from the N-terminus, the 405-residue chain is CLIP domain-containing serine protease B8 (405 aa).

The N-terminal stretch at 1–24 is a signal peptide; the sequence is MSSAVLLLLVCGCALAVLSPVAYG. 3 cysteine pairs are disulfide-bonded: cysteine 41-cysteine 94, cysteine 52-cysteine 84, and cysteine 58-cysteine 95. In terms of domain architecture, Clip spans 41–95; the sequence is CDIPNEPNPGQCMLPAECVAYGKINDVSSLSSIERFSFIKQIQCNGSDTVPYVCC. Residues asparagine 85 and asparagine 108 are each glycosylated (N-linked (GlcNAc...) asparagine). The 268-residue stretch at 137–404 folds into the Peptidase S1 domain; sequence IRGGQLAEID…YLPWIKMYTG (268 aa). The cysteines at positions 167 and 183 are disulfide-linked. Residues histidine 182 and aspartate 249 each act as charge relay system in the active site. 2 disulfide bridges follow: cysteine 322-cysteine 339 and cysteine 349-cysteine 380. Serine 353 serves as the catalytic Charge relay system.

This sequence belongs to the peptidase S1 family. CLIP subfamily. Post-translationally, proteolytic cleavage is necessary for activation. Cleaved and activated by CLIPB4.

The protein localises to the secreted. Its function is as follows. Serine protease that functions in the melanization-mediated immune response. Preferentially, cleaves substrates with an arginine at the P1 site. May be involved in the activation of the prophenoloxidase cascade upstream of CLIPB9; does not cleave prophenoloxidase. This chain is CLIP domain-containing serine protease B8, found in Anopheles gambiae (African malaria mosquito).